We begin with the raw amino-acid sequence, 495 residues long: NAD(+)--protein-arginine ADP-ribosyltransferase Tre1 (495 aa).

Positions 278-309 (PDLQIKGPTPVKKPEPLQPARQPEKASAPKPV) are disordered. A TR mART core domain is found at 315 to 495 (MSLREAVGNQ…VTQFILKEIP (181 aa)). The tract at residues 344-495 (RSALLTDDQI…VTQFILKEIP (152 aa)) is ART domain. Active-site residues include Arg-406, Ser-431, and Glu-466.

It belongs to the Arg-specific ADP-ribosyltransferase family.

It is found in the secreted. The protein resides in the host cytoplasm. It catalyses the reaction L-arginyl-[protein] + NAD(+) = N(omega)-(ADP-D-ribosyl)-L-arginyl-[protein] + nicotinamide + H(+). Its function is as follows. Toxic component of a contact-dependent interbacterial competition system (also called effector-immunity systems). Acts by ADP-ribosylating a number of target proteins in target cells; E.coli target proteins include FtsZ, EFTu, RNase E, Fis, YegQ, GuaB and IF2. This Pseudomonas putida (strain GB-1) protein is NAD(+)--protein-arginine ADP-ribosyltransferase Tre1.